We begin with the raw amino-acid sequence, 657 residues long: uncharacterized protein (657 aa).

The first 17 residues, 1–17 (MACVLACVAVLIGAASA), serve as a signal peptide directing secretion.

This is an uncharacterized protein from Orgyia pseudotsugata (Douglas-fir tussock moth).